A 57-amino-acid chain; its full sequence is Probable antitoxin MazE1 (57 aa).

Forms a complex with cognate toxin MazF1.

Its function is as follows. Antitoxin component of a type II toxin-antitoxin (TA) system. The sequence is that of Probable antitoxin MazE1 (mazE1) from Mycobacterium tuberculosis (strain ATCC 25618 / H37Rv).